We begin with the raw amino-acid sequence, 856 residues long: Facilitated trehalose transporter Tret1 (856 aa).

Disordered regions lie at residues 1 to 27 and 62 to 202; these read MSGRDNRGAGGGGGGHQPLSNAMGKLK and DPFL…KATS. Over 1 to 389 the chain is Cytoplasmic; the sequence is MSGRDNRGAG…LEVYRPTTNP (389 aa). A compositionally biased stretch (polar residues) spans 69 to 80; sequence VSPQRHPQTVRT. A compositionally biased stretch (basic and acidic residues) spans 133-142; the sequence is EIREHRDRQQ. Residues 170 to 180 show a composition bias toward polar residues; the sequence is GNSNTNNNKAA. 5 positions are modified to phosphoserine: Ser247, Ser248, Ser249, Ser319, and Ser321. The interval 326–345 is disordered; sequence LTSRQHFQQQRSISTDSRKS. A compositionally biased stretch (polar residues) spans 329–340; the sequence is RQHFQQQRSIST. Residues 390–410 traverse the membrane as a helical segment; it reads IFIWTQVLAALSVSLGSLVVG. Topologically, residues 411–439 are extracellular; sequence FVSAYTSPALVSMTDRNITSFEVTQDAGS. N-linked (GlcNAc...) asparagine glycosylation is present at Asn427. The chain crosses the membrane as a helical span at residues 440–460; it reads WVGGIMPLAGLAGGIAGGPLI. The Cytoplasmic segment spans residues 461-472; it reads EYLGRRNTILAT. A helical membrane pass occupies residues 473–493; that stretch reads AVPFIVSSLLIACAVNVAMVL. Residues 494 to 496 are Extracellular-facing; sequence CGR. Residues 497–517 traverse the membrane as a helical segment; it reads FLAGFCVGIASLSLPVYLGET. Residues 518–527 are Cytoplasmic-facing; it reads VQPEVRGTLG. Residues 528 to 548 traverse the membrane as a helical segment; that stretch reads LLPTAFGNIGILLCFVAGSFM. The N-linked (GlcNAc...) asparagine glycan is linked to Asn549. Topologically, residues 549 to 551 are extracellular; it reads NWS. The chain crosses the membrane as a helical span at residues 552–572; it reads MLAFLGAALPVPFLILMFLIP. Over 573 to 635 the chain is Cytoplasmic; that stretch reads ETPRWFVSRG…ELLKRNNLKP (63 aa). Residues 636-656 form a helical membrane-spanning segment; it reads LSISLGLMFFQQLSGINAVIF. Residues 657–672 lie on the Extracellular side of the membrane; sequence YTVQIFKDAGSTIDGN. Residues 673 to 693 form a helical membrane-spanning segment; the sequence is ICTIIVGVVNFLATFIGIVLI. Topologically, residues 694 to 699 are cytoplasmic; that stretch reads DRAGRK. The chain crosses the membrane as a helical span at residues 700–720; that stretch reads ILLYVSNIAMILTLFVLGGFF. Residues 721–739 are Extracellular-facing; sequence YCKAHGPDVSNLGWLPLTC. A helical membrane pass occupies residues 740 to 760; sequence FVIYILGFSLGFGPIPWLMMG. The Cytoplasmic segment spans residues 761-766; sequence EILPAK. The helical transmembrane segment at 767 to 787 threads the bilayer; that stretch reads IRGSAASVATAFNWSCTFVVT. Over 788-800 the chain is Extracellular; the sequence is KTFQDLTVAMGAH. The helical transmembrane segment at 801–821 threads the bilayer; that stretch reads GAFWLFGAICFVGLFFVIIYV. Over 822-856 the chain is Cytoplasmic; it reads PETQGKTLEDIERKMMGRVRRMSSVANIKPLSFNM. Residues Ser844 and Ser845 each carry the phosphoserine modification.

This sequence belongs to the major facilitator superfamily. Sugar transporter (TC 2.A.1.1) family. Trehalose transporter subfamily.

It is found in the cell membrane. Low-capacity facilitative transporter for trehalose. Does not transport maltose, sucrose or lactose. Mediates the bidirectional transfer of trehalose. Responsible for the transport of trehalose synthesized in the fat body and the incorporation of trehalose into other tissues that require a carbon source, thereby regulating trehalose levels in the hemolymph. This is Facilitated trehalose transporter Tret1 from Drosophila erecta (Fruit fly).